Here is an 88-residue protein sequence, read N- to C-terminus: Small ribosomal subunit protein uS15c (88 aa).

It belongs to the universal ribosomal protein uS15 family. Part of the 30S ribosomal subunit.

It is found in the plastid. The protein localises to the chloroplast. The chain is Small ribosomal subunit protein uS15c (rps15) from Angiopteris evecta (Mule's foot fern).